We begin with the raw amino-acid sequence, 139 residues long: MPNIFKILLIVLLAVVSFRLSASTGDKKTANDGSGNNSSAGIGTKIKRIVTAGLLFTSLATGGAEAIGRSNAQGGNAAGLVPSHLTNRSMAPPPPPAQFEKGAATRVEKMRAQLRELAEKMTDKDPKRLSPSGPDPHHH.

A signal peptide spans 1 to 22 (MPNIFKILLIVLLAVVSFRLSA). The segment at 23–90 (STGDKKTAND…VPSHLTNRSM (68 aa)) is required for secretion from the host cytoplasm to the host apoplasm. Asn-37 and Asn-87 each carry an N-linked (GlcNAc...) asparagine glycan. The segment at 66–139 (AIGRSNAQGG…SPSGPDPHHH (74 aa)) is disordered. The stretch at 100-125 (EKGAATRVEKMRAQLRELAEKMTDKD) forms a coiled coil. Positions 106 to 128 (RVEKMRAQLRELAEKMTDKDPKR) are enriched in basic and acidic residues. The short motif at 128 to 139 (RLSPSGPDPHHH) is the CLE element.

It belongs to the CLV3/ESR signal peptide family. As to expression, highly expressed exclusively within the dorsal esophageal gland cell during syncytium formation in host plants (at protein level).

Its subcellular location is the secreted. It localises to the host cytoplasm. The protein localises to the host extracellular space. It is found in the extracellular space. The protein resides in the apoplast. In terms of biological role, mimics host plant CLE extracellular signal peptides that regulate cell fate. May play a role in the differentiation or division of feeding cells (syncytia) induced in plant roots during infection. The protein is CLAVATA3/ESR (CLE)-related protein 1 (CLE1) of Heterodera glycines (Soybean cyst nematode worm).